The primary structure comprises 238 residues: Fatty acid metabolism regulator protein (238 aa).

An HTH gntR-type domain is found at 6 to 74 (KGPASFAEKY…HGKPTRVNNF (69 aa)). The segment at residues 34–53 (ERELSELIGVTRTTLREVLQ) is a DNA-binding region (H-T-H motif).

In terms of assembly, homodimer.

The protein resides in the cytoplasm. Functionally, multifunctional regulator of fatty acid metabolism. The chain is Fatty acid metabolism regulator protein from Shewanella baltica (strain OS223).